We begin with the raw amino-acid sequence, 161 residues long: Ribonuclease H (161 aa).

The RNase H type-1 domain maps to 12 to 155 (QPQHVVIYTD…ADALANKGVE (144 aa)). The Mg(2+) site is built by D21, E59, D81, and D147.

This sequence belongs to the RNase H family. In terms of assembly, monomer. Mg(2+) serves as cofactor.

It is found in the cytoplasm. The enzyme catalyses Endonucleolytic cleavage to 5'-phosphomonoester.. Endonuclease that specifically degrades the RNA of RNA-DNA hybrids. The polypeptide is Ribonuclease H (Polaromonas naphthalenivorans (strain CJ2)).